The primary structure comprises 2495 residues: Zinc finger protein 462 (2495 aa).

3 C2H2-type zinc fingers span residues 4-27, 108-131, and 162-185; these read LQCD…QDVH, FQCK…RKVH, and FSCQ…KMYH. K20 participates in a covalent cross-link: Glycyl lysine isopeptide (Lys-Gly) (interchain with G-Cter in SUMO1); alternate. A Glycyl lysine isopeptide (Lys-Gly) (interchain with G-Cter in SUMO2); alternate cross-link involves residue K20. The interval 215-241 is interaction with PBX1; it reads PCKELPAEVVERSILESMVKPLTKSRG. Glycyl lysine isopeptide (Lys-Gly) (interchain with G-Cter in SUMO2) cross-links involve residues K234 and K271. Disordered stretches follow at residues 278–301, 329–357, and 370–395; these read QQEG…NSTY, RPNS…NSGL, and DMTN…DLNE. Residues 332 to 343 are compositionally biased toward low complexity; it reads SSSTSKFSSSMS. Glycyl lysine isopeptide (Lys-Gly) (interchain with G-Cter in SUMO2) cross-links involve residues K337, K348, and K350. 2 positions are modified to phosphoserine: S351 and S355. Residues 370–387 show a composition bias toward polar residues; sequence DMTNSSADLDTNSMLNDS. Residue K429 forms a Glycyl lysine isopeptide (Lys-Gly) (interchain with G-Cter in SUMO2) linkage. C2H2-type zinc fingers lie at residues 440 to 463 and 471 to 493; these read FQCP…ENIH and YKCD…KQCH. K485 is covalently cross-linked (Glycyl lysine isopeptide (Lys-Gly) (interchain with G-Cter in SUMO2)). The segment at 492 to 590 is disordered; it reads CHTGTSDWDT…PQPPTQAPPL (99 aa). Polar residues predominate over residues 493-502; that stretch reads HTGTSDWDTV. The span at 503 to 515 shows a compositional bias: low complexity; the sequence is NSQSESLSSSLNE. Residues 542–590 show a composition bias toward pro residues; the sequence is PPQPPPPLPPPPPPPSQPLPQPPPPPLQSPHQVPPPTQQPQPPTQAPPL. The C2H2-type 6 zinc-finger motif lies at 593–616; it reads YKCTMCSYSTMTLKGLRVHQQHKH. Glycyl lysine isopeptide (Lys-Gly) (interchain with G-Cter in SUMO2) cross-links involve residues K624, K650, and K661. The segment at 629–654 is disordered; sequence PSSLPLENETDSHPSSSNTVKKSQTS. Over residues 641-654 the composition is skewed to polar residues; that stretch reads HPSSSNTVKKSQTS. S681 is modified (phosphoserine). A Glycyl lysine isopeptide (Lys-Gly) (interchain with G-Cter in SUMO2) cross-link involves residue K699. 3 consecutive C2H2-type zinc fingers follow at residues 835–858, 878–900, and 917–940; these read YYCK…QRMH, YRCL…YGEH, and YRCR…QRMH. K978 is covalently cross-linked (Glycyl lysine isopeptide (Lys-Gly) (interchain with G-Cter in SUMO2)). The disordered stretch occupies residues 980–999; sequence MATSTPVARGGGLPATFNKN. The segment at 1023 to 1046 adopts a C2H2-type 10 zinc-finger fold; sequence YDCDVCSFASPNMHSVLVHYQKKH. A Phosphoserine modification is found at S1083. Residue K1128 forms a Glycyl lysine isopeptide (Lys-Gly) (interchain with G-Cter in SUMO2) linkage. S1159 carries the phosphoserine modification. Glycyl lysine isopeptide (Lys-Gly) (interchain with G-Cter in SUMO2) cross-links involve residues K1196, K1204, K1210, and K1232. C2H2-type zinc fingers lie at residues 1254 to 1277 and 1459 to 1482; these read LKCR…KKDH and YQCT…GKKH. Residue K1488 forms a Glycyl lysine isopeptide (Lys-Gly) (interchain with G-Cter in SUMO2) linkage. The C2H2-type 13 zinc finger occupies 1504–1527; that stretch reads YKCRHCPYINTRIHGVLTHYQKRH. Glycyl lysine isopeptide (Lys-Gly) (interchain with G-Cter in SUMO2) cross-links involve residues K1560 and K1580. C2H2-type zinc fingers lie at residues 1566–1589, 1649–1672, and 1686–1709; these read YRCK…EKYH, FRCQ…RIKH, and FKCA…QKRH. Residues K1687 and K1769 each participate in a glycyl lysine isopeptide (Lys-Gly) (interchain with G-Cter in SUMO2) cross-link. The segment at 1881–1903 adopts a C2H2-type 17 zinc-finger fold; it reads FQCKHCDSKLQSIAELTSHLNIH. A Glycyl lysine isopeptide (Lys-Gly) (interchain with G-Cter in SUMO2) cross-link involves residue K1935. The C2H2-type 18; degenerate zinc-finger motif lies at 1957–1981; that stretch reads YKCKFCVEVHPTLRAICNHLRKHVQ. K1993 carries the N6-methyllysine modification. C2H2-type zinc fingers lie at residues 2014–2037, 2043–2066, and 2072–2095; these read YSCQ…QTHH, FRCK…LKAH, and YKCS…LKVH. A Glycyl lysine isopeptide (Lys-Gly) (interchain with G-Cter in SUMO2) cross-link involves residue K2093. 2 stretches are compositionally biased toward polar residues: residues 2112-2121 and 2132-2149; these read SHAHPSSQKA and DSSY…NHYQ. The tract at residues 2112 to 2172 is disordered; that stretch reads SHAHPSSQKA…VPPSGTAAGT (61 aa). 2 positions are modified to phosphoserine: S2161 and S2166. C2H2-type zinc fingers lie at residues 2180 to 2203, 2209 to 2232, and 2243 to 2265; these read LHCE…RDKH, FKCK…EAGH, and LRCP…IVLH. A Glycyl lysine isopeptide (Lys-Gly) (interchain with G-Cter in SUMO2) cross-link involves residue K2282. C2H2-type zinc fingers lie at residues 2289 to 2311 and 2317 to 2340; these read FRCD…IEKH and YKCQ…RDEH. Positions 2361 to 2387 are disordered; it reads KEKIESSSSEDEDKDDEMSSKAEDREL. The span at 2377-2387 shows a compositional bias: basic and acidic residues; that stretch reads EMSSKAEDREL. The C2H2-type 27 zinc-finger motif lies at 2403–2425; the sequence is FPCEFCGRAFSQGSEWERHVLRH. A Glycyl lysine isopeptide (Lys-Gly) (interchain with G-Cter in SUMO2) cross-link involves residue K2493.

As to quaternary structure, interacts with PBX1 isoform PBX1b; this interaction prevents PBX1-HOXA9 heterodimer from forming and binding to DNA. Expressed in the cerebral cortex (at protein level). Expressed in embryonic stem cells (at protein level). Expressed in heart, liver, kidney, muscle, and female and male genital tracts (at protein level).

The protein localises to the nucleus. In terms of biological role, zinc finger nuclear factor involved in transcription by regulating chromatin structure and organization. Involved in the pluripotency and differentiation of embryonic stem cells by regulating SOX2, POU5F1/OCT4, and NANOG. By binding PBX1, prevents the heterodimerization of PBX1 and HOXA9 and their binding to DNA. Regulates neuronal development and neural cell differentiation. The sequence is that of Zinc finger protein 462 from Mus musculus (Mouse).